The primary structure comprises 402 residues: Tryptophan synthase beta chain (402 aa).

An N6-(pyridoxal phosphate)lysine modification is found at Lys-91.

Belongs to the TrpB family. In terms of assembly, tetramer of two alpha and two beta chains. Pyridoxal 5'-phosphate is required as a cofactor.

It carries out the reaction (1S,2R)-1-C-(indol-3-yl)glycerol 3-phosphate + L-serine = D-glyceraldehyde 3-phosphate + L-tryptophan + H2O. The protein operates within amino-acid biosynthesis; L-tryptophan biosynthesis; L-tryptophan from chorismate: step 5/5. In terms of biological role, the beta subunit is responsible for the synthesis of L-tryptophan from indole and L-serine. The chain is Tryptophan synthase beta chain from Streptococcus thermophilus (strain ATCC BAA-491 / LMD-9).